Consider the following 301-residue polypeptide: Phosphate transport system permease protein PstA 2 (301 aa).

Transmembrane regions (helical) follow at residues 36-56 (ACVC…IGVV), 83-103 (IIGT…VSVL), 127-147 (LSGI…VVYF), 149-169 (WGFS…PYIA), 209-229 (GIVT…APLL), and 274-294 (ALLL…INWL). Positions 83–288 (IIGTAVLAIG…VFLLLLIFIG (206 aa)) constitute an ABC transmembrane type-1 domain.

The protein belongs to the binding-protein-dependent transport system permease family. CysTW subfamily.

The protein resides in the cell membrane. Functionally, part of the binding-protein-dependent transport system for phosphate; probably responsible for the translocation of the substrate across the membrane. This chain is Phosphate transport system permease protein PstA 2 (pstA2), found in Mycobacterium bovis (strain ATCC BAA-935 / AF2122/97).